A 299-amino-acid polypeptide reads, in one-letter code: Farnesyl diphosphate synthase (299 aa).

Isopentenyl diphosphate is bound by residues Lys-45, Arg-48, and His-77. Mg(2+)-binding residues include Asp-84 and Asp-90. Residue Arg-95 coordinates (2E)-geranyl diphosphate. An isopentenyl diphosphate-binding site is contributed by Arg-96. Lys-181, Thr-182, Gln-220, and Lys-237 together coordinate (2E)-geranyl diphosphate.

Belongs to the FPP/GGPP synthase family. Requires Mg(2+) as cofactor.

The protein resides in the cytoplasm. The catalysed reaction is isopentenyl diphosphate + (2E)-geranyl diphosphate = (2E,6E)-farnesyl diphosphate + diphosphate. This Escherichia coli (strain K12) protein is Farnesyl diphosphate synthase (ispA).